We begin with the raw amino-acid sequence, 551 residues long: L-lactate permease (551 aa).

12 helical membrane passes run 13-33 (NIWL…FALI), 37-57 (LKGY…ALLF), 69-89 (VVYG…AAVF), 131-151 (GAAG…GLGF), 159-179 (LCLI…PILV), 194-214 (MVGR…MAIM), 245-265 (IGPE…LTLF), 306-326 (FLFL…ALFA), 366-386 (FDWF…SIVW), 405-425 (LALP…SNYS), 438-458 (TGSA…FLTG), and 530-550 (IFTC…TWMI).

This sequence belongs to the lactate permease family.

Its subcellular location is the cell inner membrane. It catalyses the reaction (S)-lactate(in) + H(+)(in) = (S)-lactate(out) + H(+)(out). The enzyme catalyses (R)-lactate(in) + H(+)(in) = (R)-lactate(out) + H(+)(out). The catalysed reaction is glycolate(in) + H(+)(in) = glycolate(out) + H(+)(out). In terms of biological role, uptake of L-lactate across the membrane. Can also transport D-lactate and glycolate. Seems to be driven by a proton motive force. This is L-lactate permease (lldP) from Salmonella typhi.